The following is a 540-amino-acid chain: Threonine--tRNA ligase catalytic subunit (540 aa).

Residues 134–428 (DHRIIGERLD…LLEHFRGKLP (295 aa)) are catalytic. Cys-226, His-277, and His-405 together coordinate Zn(2+).

The protein belongs to the class-II aminoacyl-tRNA synthetase family. In terms of assembly, homodimer. Probably interacts with its editing subunit. Zn(2+) is required as a cofactor.

The protein localises to the cytoplasm. The catalysed reaction is tRNA(Thr) + L-threonine + ATP = L-threonyl-tRNA(Thr) + AMP + diphosphate + H(+). Catalyzes the attachment of threonine to tRNA(Thr) in a two-step reaction: L-threonine is first activated by ATP to form Thr-AMP and then transferred to the acceptor end of tRNA(Thr). Also activates L-serine and transfers it to tRNA(Thr) but cannot deacylate incorrectly charged amino acid; unlike most archaea the editing function is found in a freestanding protein. This chain is Threonine--tRNA ligase catalytic subunit, found in Sulfurisphaera tokodaii (strain DSM 16993 / JCM 10545 / NBRC 100140 / 7) (Sulfolobus tokodaii).